The primary structure comprises 341 residues: MSNLPPDEKVILFDKSKHVQYIVEQESHRSFEYWLSEHLRMNGLYWGVTALITMNELSALAQQDVIDYIMLCWDDKTGAFGSFPKHDGHILSTLSALQVLKIYDQELTVLNDNNESSNGNKRERLIKFITGLQLPDGSFQGDKYGEVDTRFVYTAVSSLSLLNALTDSIADTASAFIMQCFNFDGGFGLIPGSESHAAQVFTCVGALAIMNKLDLLDVENKKVKLIDWLTERQVLPSGGFNGRPEKLPDVCYSWWVLSSLSILKRKNWVDLKILENFILTCQDLENGGFSDRPGNQTDVYHTCFAIAGLSLIDYKKYGFKEIDPVYCMPVEVTSKFVRRSA.

PFTB repeat units follow at residues 15 to 55 (KSKH…ITMN), 62 to 104 (QQDV…KIYD), 122 to 163 (RERL…SLLN), 170 to 211 (ADTA…AIMN), 223 to 264 (VKLI…SILK), and 271 to 313 (LKIL…SLID). Geranylgeranyl diphosphate is bound by residues 196–198 (HAA) and 243–255 (RPEK…YSWW). The Zn(2+) site is built by aspartate 249, cysteine 251, and histidine 301.

This sequence belongs to the protein prenyltransferase subunit beta family. As to quaternary structure, heterodimer of an alpha and a beta subunit. The cofactor is Zn(2+).

The catalysed reaction is geranylgeranyl diphosphate + L-cysteinyl-[protein] = S-geranylgeranyl-L-cysteinyl-[protein] + diphosphate. Its function is as follows. Catalyzes the transfer of a geranyl-geranyl moiety from geranyl-geranyl pyrophosphate to proteins having the C-terminal -XCC or -XCXC, where both cysteines may become modified. Acts on YPT1 and SEC4. The chain is Geranylgeranyl transferase type-2 subunit beta (BET2) from Candida albicans (Yeast).